Consider the following 342-residue polypeptide: Oxygen-dependent coproporphyrinogen-III oxidase (342 aa).

S98 lines the substrate pocket. Positions 102 and 112 each coordinate a divalent metal cation. Catalysis depends on H112, which acts as the Proton donor. Residue 114 to 116 coordinates substrate; sequence NYR. Residues H146 and H176 each contribute to the a divalent metal cation site. Residues 266 to 301 form an important for dimerization region; the sequence is YVEFNLVWDRGTIFGLQTNGRTESILMSLPPLARWE.

It belongs to the aerobic coproporphyrinogen-III oxidase family. As to quaternary structure, homodimer. A divalent metal cation is required as a cofactor.

Its subcellular location is the cytoplasm. The catalysed reaction is coproporphyrinogen III + O2 + 2 H(+) = protoporphyrinogen IX + 2 CO2 + 2 H2O. The protein operates within porphyrin-containing compound metabolism; protoporphyrin-IX biosynthesis; protoporphyrinogen-IX from coproporphyrinogen-III (O2 route): step 1/1. Involved in the heme and chlorophyll biosynthesis. Catalyzes the aerobic oxidative decarboxylation of propionate groups of rings A and B of coproporphyrinogen-III to yield the vinyl groups in protoporphyrinogen-IX. This Prochlorococcus marinus subsp. pastoris (strain CCMP1986 / NIES-2087 / MED4) protein is Oxygen-dependent coproporphyrinogen-III oxidase.